The following is a 186-amino-acid chain: Probable RNA 2'-phosphotransferase (186 aa).

The protein belongs to the KptA/TPT1 family.

Functionally, removes the 2'-phosphate from RNA via an intermediate in which the phosphate is ADP-ribosylated by NAD followed by a presumed transesterification to release the RNA and generate ADP-ribose 1''-2''-cyclic phosphate (APPR&gt;P). May function as an ADP-ribosylase. This Pectobacterium carotovorum subsp. carotovorum (strain PC1) protein is Probable RNA 2'-phosphotransferase.